The primary structure comprises 335 residues: D-arabinose 1-dehydrogenase (335 aa).

Tyrosine 58 acts as the Proton donor in catalysis. Position 124 (histidine 124) interacts with substrate. NAD(+) is bound at residue 221–287 (SLLRSQETRQ…VSSMEELKLA (67 aa)).

The protein belongs to the aldo/keto reductase family. Aldo/keto reductase 2 subfamily.

The enzyme catalyses D-arabinose + NAD(+) = D-arabinono-1,4-lactone + NADH + H(+). The polypeptide is D-arabinose 1-dehydrogenase (ARA2) (Saccharomyces cerevisiae (strain ATCC 204508 / S288c) (Baker's yeast)).